We begin with the raw amino-acid sequence, 287 residues long: Ribosomal RNA small subunit methyltransferase A (287 aa).

Residues 1 to 15 are compositionally biased toward polar residues; sequence MSKTTFDAQSITNSL. The segment at 1-20 is disordered; sequence MSKTTFDAQSITNSLRAAKH. Asn-29, Leu-31, Gly-56, Glu-77, and Asn-126 together coordinate S-adenosyl-L-methionine.

The protein belongs to the class I-like SAM-binding methyltransferase superfamily. rRNA adenine N(6)-methyltransferase family. RsmA subfamily.

It is found in the cytoplasm. The enzyme catalyses adenosine(1518)/adenosine(1519) in 16S rRNA + 4 S-adenosyl-L-methionine = N(6)-dimethyladenosine(1518)/N(6)-dimethyladenosine(1519) in 16S rRNA + 4 S-adenosyl-L-homocysteine + 4 H(+). Functionally, specifically dimethylates two adjacent adenosines (A1518 and A1519) in the loop of a conserved hairpin near the 3'-end of 16S rRNA in the 30S particle. May play a critical role in biogenesis of 30S subunits. This is Ribosomal RNA small subunit methyltransferase A from Psychrobacter cryohalolentis (strain ATCC BAA-1226 / DSM 17306 / VKM B-2378 / K5).